The following is a 234-amino-acid chain: Coiled-coil domain-containing protein 194 (234 aa).

A signal peptide spans M1–A43. Residues R44–S63 form a disordered region. Residues V67–A171 are a coiled coil. Residues G194 to Q234 are disordered. Positions R203 to K219 are enriched in basic residues.

The polypeptide is Coiled-coil domain-containing protein 194 (Mus musculus (Mouse)).